Reading from the N-terminus, the 243-residue chain is 1-(5-phosphoribosyl)-5-[(5-phosphoribosylamino)methylideneamino] imidazole-4-carboxamide isomerase (243 aa).

D10 functions as the Proton acceptor in the catalytic mechanism. D131 (proton donor) is an active-site residue.

It belongs to the HisA/HisF family.

The protein resides in the cytoplasm. The enzyme catalyses 1-(5-phospho-beta-D-ribosyl)-5-[(5-phospho-beta-D-ribosylamino)methylideneamino]imidazole-4-carboxamide = 5-[(5-phospho-1-deoxy-D-ribulos-1-ylimino)methylamino]-1-(5-phospho-beta-D-ribosyl)imidazole-4-carboxamide. The protein operates within amino-acid biosynthesis; L-histidine biosynthesis; L-histidine from 5-phospho-alpha-D-ribose 1-diphosphate: step 4/9. This is 1-(5-phosphoribosyl)-5-[(5-phosphoribosylamino)methylideneamino] imidazole-4-carboxamide isomerase from Rhizorhabdus wittichii (strain DSM 6014 / CCUG 31198 / JCM 15750 / NBRC 105917 / EY 4224 / RW1) (Sphingomonas wittichii).